The sequence spans 243 residues: Ras-related protein Rab-12 (243 aa).

Met1 carries the post-translational modification N-acetylmethionine. The tract at residues 1 to 36 is disordered; that stretch reads MDPSAALHRRPAGGSLGAVSPALSGGQARRRKQPPR. A phosphoserine mark is found at Ser15, Ser20, and Ser24. 7 residues coordinate GTP: Gly51, Val52, Gly53, Lys54, Thr55, Ser72, and Thr73. Thr55 is a Mg(2+) binding site. 2 consecutive short sequence motifs (switch) follow at residues 64–78 and 96–113; these read DTFC…GVDF and DTAG…YYRS. Positions 73 and 96 each coordinate Mg(2+). Gly99 contacts GTP. Ser105 is subject to Phosphoserine; by LRRK2. GTP-binding residues include Asn154, Lys155, Asp157, Ser185, Ala186, and Lys187. 2 S-geranylgeranyl cysteine lipidation sites follow: Cys242 and Cys243.

It belongs to the small GTPase superfamily. Rab family. Interacts with RABIF and OPTN. Interacts with LRRK2; interaction facilitates phosphorylation of Ser-105. Interacts with GDI1, GDI2, CHM and CHML; these interactions are disrupted by phosphorylation on Ser-105. Interacts with RILPL1 and RILPL2; these interactions are dependent on phosphorylation of Ser-105. Mg(2+) is required as a cofactor. Phosphorylation of Ser-105 in the switch II region by LRRK2 prevents the association of RAB regulatory proteins, including CHM, CHML and RAB GDP dissociation inhibitors GDI1 and GDI2. As to expression, ubiquitously expressed.

The protein localises to the recycling endosome membrane. Its subcellular location is the lysosome membrane. It is found in the golgi apparatus membrane. It localises to the cytoplasmic vesicle. The protein resides in the autophagosome. The catalysed reaction is GTP + H2O = GDP + phosphate + H(+). Regulated by guanine nucleotide exchange factors (GEFs) including DENND3 which promote the exchange of bound GDP for free GTP. Regulated by GTPase activating proteins (GAPs) which increase the GTP hydrolysis activity. Inhibited by GDP dissociation inhibitors (GDIs). The small GTPases Rab are key regulators of intracellular membrane trafficking, from the formation of transport vesicles to their fusion with membranes. Rabs cycle between an inactive GDP-bound form and an active GTP-bound form that is able to recruit to membranes different set of downstream effectors directly responsible for vesicle formation, movement, tethering and fusion. RAB12 may play a role in protein transport from recycling endosomes to lysosomes regulating, for instance, the degradation of the transferrin receptor. Involved in autophagy. The protein is Ras-related protein Rab-12 of Mus musculus (Mouse).